The chain runs to 746 residues: Protein O-mannosyl-transferase 1 (746 aa).

The next 7 membrane-spanning stretches (helical) occupy residues 30 to 50 (PLVV…LGLL), 90 to 110 (FGHM…NFLW), 121 to 141 (VPIW…VPMA), 144 to 164 (IVLE…LMLI), 176 to 196 (LLES…LKFF), 228 to 248 (MGIF…WNLI), and 266 to 286 (IVAL…VHLM). MIR domains lie at 318 to 381 (PLEV…VKDP), 392 to 449 (PRPV…LDIV), and 453 to 513 (SNRD…VEEH). Residues Asn-435, Asn-471, and Asn-539 are each glycosylated (N-linked (GlcNAc...) asparagine). Helical transmembrane passes span 597–617 (IVIW…FFWY), 636–656 (WVLA…PFFL), and 660–680 (VLFL…LPIV).

Belongs to the glycosyltransferase 39 family.

The protein localises to the endoplasmic reticulum membrane. It catalyses the reaction a di-trans,poly-cis-dolichyl beta-D-mannosyl phosphate + L-seryl-[protein] = 3-O-(alpha-D-mannosyl)-L-seryl-[protein] + a di-trans,poly-cis-dolichyl phosphate + H(+). The enzyme catalyses a di-trans,poly-cis-dolichyl beta-D-mannosyl phosphate + L-threonyl-[protein] = 3-O-(alpha-D-mannosyl)-L-threonyl-[protein] + a di-trans,poly-cis-dolichyl phosphate + H(+). It functions in the pathway protein modification; protein glycosylation. Transfers mannosyl residues to the hydroxyl group of serine or threonine residues. Coexpression of both POMT1 and POMT2 is necessary for enzyme activity, expression of either POMT1 or POMT2 alone is insufficient. Essentially dedicated to O-mannosylation of alpha-DAG1 and few other proteins but not of cadherins and protocaherins. The sequence is that of Protein O-mannosyl-transferase 1 (Pomt1) from Mus musculus (Mouse).